The following is a 579-amino-acid chain: Glypican-2 (579 aa).

The N-terminal stretch at 1–23 (MSALRPLLLLLLPLCPGPGPGPG) is a signal peptide. 3 O-linked (Xyl...) (heparan sulfate) serine glycosylation sites follow: serine 55, serine 92, and serine 155. Disordered regions lie at residues 444-468 (GGSPAEQVNNPELKVDASGPDVPTR) and 485-555 (ALGH…RSGG). Serine 500 and serine 502 each carry an O-linked (Xyl...) (heparan sulfate) serine glycan. Positions 520-529 (PARPPRPPYP) are enriched in pro residues. The GPI-anchor amidated glycine moiety is linked to residue glycine 554. The propeptide at 555–579 (GASIGFHTQTILILSLSALALLGPR) is removed in mature form.

The protein belongs to the glypican family. In terms of assembly, interacts (via heparan sulfate) with PTN; this interaction promotes neurite outgrowth through binding of PTN with chondroitin sulfate of proteoglycans, thereby releasing PTPRS of chondroitin sulfate proteoglycans (CSPGs) and leading to binding with heparan sulfate of GPC2. Interacts (heparan sulfate chain) with MDK; this interaction is inhibited by heparin followed by chondroitin sulfate E; this interaction induces GPC2 clustering through heparan sulfate chain; this interaction induces neuronal cell adhesion and neurite outgrowth.

The protein localises to the cell membrane. Its subcellular location is the secreted. It localises to the extracellular space. Its function is as follows. Cell surface proteoglycan that bears heparan sulfate. May fulfill a function related to the motile behaviors of developing neurons. This Homo sapiens (Human) protein is Glypican-2 (GPC2).